We begin with the raw amino-acid sequence, 437 residues long: Na(+)/H(+) antiporter NhaA (437 aa).

A run of 11 helical transmembrane segments spans residues 12 to 32 (SMNI…AVIA), 65 to 85 (LTMI…MVGL), 103 to 123 (ALPF…YSMV), 133 to 153 (GLAI…SLLG), 162 to 182 (IFLT…IAIF), 186 to 206 (HVAY…YFIG), 214 to 234 (IFFL…GIHS), 308 to 328 (GAVN…VMFS), 333 to 353 (VIGG…FLGI), 377 to 397 (ISGV…IANL), and 412 to 432 (LGVL…LHWV).

Belongs to the NhaA Na(+)/H(+) (TC 2.A.33) antiporter family.

The protein resides in the cell inner membrane. The catalysed reaction is Na(+)(in) + 2 H(+)(out) = Na(+)(out) + 2 H(+)(in). Functionally, na(+)/H(+) antiporter that extrudes sodium in exchange for external protons. The chain is Na(+)/H(+) antiporter NhaA from Bacteroides fragilis (strain ATCC 25285 / DSM 2151 / CCUG 4856 / JCM 11019 / LMG 10263 / NCTC 9343 / Onslow / VPI 2553 / EN-2).